Consider the following 246-residue polypeptide: Homeobox protein Hox-B4a (246 aa).

The disordered stretch occupies residues 23–125 (YSQSDYLPSH…SQNTSTVSSR (103 aa)). Composition is skewed to polar residues over residues 39-48 (AQRQDPSFQH) and 112-123 (QTPTSQNTSTVS). An Antp-type hexapeptide motif is present at residues 130–135 (VYPWMK). A DNA-binding region (homeobox) is located at residues 151–210 (PKRSRTAYTRQQVLELEKEFHYNRYLTRRRRVEIAHTLCLSERQIKIWFQNRRMKWKKDH). The interval 210-246 (HKLPNTKIRSNSASTNSSGCPTLCSNQSRASGPPPSL) is disordered. Positions 216 to 239 (KIRSNSASTNSSGCPTLCSNQSRA) are enriched in polar residues.

It belongs to the Antp homeobox family. Deformed subfamily.

The protein resides in the nucleus. Sequence-specific transcription factor which is part of a developmental regulatory system that provides cells with specific positional identities on the anterior-posterior axis. The chain is Homeobox protein Hox-B4a (hoxb4a) from Danio rerio (Zebrafish).